We begin with the raw amino-acid sequence, 229 residues long: Glutathione S-transferase 1 (229 aa).

In terms of domain architecture, GST N-terminal spans 2–86; that stretch reads AQFTLWSHAH…YLADKYDTER (85 aa). One can recognise a GST C-terminal domain in the interval 93–229; the sequence is DHPEYYKVIQ…FEERSKALDN (137 aa).

It belongs to the GST superfamily.

It catalyses the reaction RX + glutathione = an S-substituted glutathione + a halide anion + H(+). Involved in the oxidative stress response and detoxification. This is Glutathione S-transferase 1 (gst1) from Schizosaccharomyces pombe (strain 972 / ATCC 24843) (Fission yeast).